Reading from the N-terminus, the 133-residue chain is Thioredoxin-like protein CXXS1 (133 aa).

The Thioredoxin domain occupies Met-1 to Glu-120.

This sequence belongs to the thioredoxin family.

The protein is Thioredoxin-like protein CXXS1 of Oryza sativa subsp. japonica (Rice).